A 535-amino-acid polypeptide reads, in one-letter code: Keratin, type II cytoskeletal 79 (535 aa).

Residues 1–12 show a composition bias toward polar residues; sequence MRSSVSRQTYST. A disordered region spans residues 1-52; it reads MRSSVSRQTYSTKGGFSSNSASGGSGSQARTSFSSVTVSRSSGSGGGAHCGP. The segment at 1-141 is head; that stretch reads MRSSVSRQTY…DPEIQRVRTQ (141 aa). Over residues 32 to 42 the composition is skewed to low complexity; it reads SFSSVTVSRSS. A compositionally biased stretch (gly residues) spans 43–52; the sequence is GSGGGAHCGP. A coil 1A region spans residues 142–177; sequence EREQIKTLNNKFASFIDKVRFLEQQNKVLETKWALL. In terms of domain architecture, IF rod spans 142 to 457; it reads EREQIKTLNN…KLLESEESRM (316 aa). The linker 1 stretch occupies residues 178 to 198; the sequence is QEQGQNLGVTRNNLEPLFEAY. The interval 199 to 290 is coil 1B; that stretch reads LGSMRSTLDR…QLYEMELSQV (92 aa). The segment at 291–314 is linker 12; it reads QTHVSNTNVVLSMDNNRNLDLDSI. The segment at 315-453 is coil 2; that stretch reads IAEVKAQYEL…ATYRKLLESE (139 aa). The segment at 454–535 is tail; sequence ESRMSGECPS…TTVKTSSQRY (82 aa).

It belongs to the intermediate filament family. In terms of assembly, heterotetramer of two type I and two type II keratins. As to expression, expressed in skeletal muscle, skin and scalp, but not in any other tissues or organs examined.

The chain is Keratin, type II cytoskeletal 79 (KRT79) from Homo sapiens (Human).